Consider the following 320-residue polypeptide: Cytochrome f (320 aa).

Residues 1 to 35 form the signal peptide; that stretch reads MQTRKTFSWIKEQINRSISVSLMIYIITRPSISIA. Heme contacts are provided by tyrosine 36, cysteine 56, cysteine 59, and histidine 60. A helical membrane pass occupies residues 286-306; the sequence is VQGLLFFLASVILAQIFLVLK.

This sequence belongs to the cytochrome f family. The 4 large subunits of the cytochrome b6-f complex are cytochrome b6, subunit IV (17 kDa polypeptide, petD), cytochrome f and the Rieske protein, while the 4 small subunits are PetG, PetL, PetM and PetN. The complex functions as a dimer. Heme is required as a cofactor.

It localises to the plastid. The protein localises to the chloroplast thylakoid membrane. Component of the cytochrome b6-f complex, which mediates electron transfer between photosystem II (PSII) and photosystem I (PSI), cyclic electron flow around PSI, and state transitions. The protein is Cytochrome f of Daucus carota (Wild carrot).